A 539-amino-acid polypeptide reads, in one-letter code: Probable malate:quinone oxidoreductase (539 aa).

The protein belongs to the MQO family. FAD is required as a cofactor.

It catalyses the reaction (S)-malate + a quinone = a quinol + oxaloacetate. Its pathway is carbohydrate metabolism; tricarboxylic acid cycle; oxaloacetate from (S)-malate (quinone route): step 1/1. This is Probable malate:quinone oxidoreductase from Sodalis glossinidius (strain morsitans).